The following is an 82-amino-acid chain: Large ribosomal subunit protein uL24c (82 aa).

This sequence belongs to the universal ribosomal protein uL24 family. As to quaternary structure, part of the 50S ribosomal subunit.

It is found in the plastid. Its subcellular location is the chloroplast. Its function is as follows. One of two assembly initiator proteins, it binds directly to the 5'-end of the 23S rRNA, where it nucleates assembly of the 50S subunit. This chain is Large ribosomal subunit protein uL24c (rpl24), found in Phaeodactylum tricornutum (strain CCAP 1055/1).